We begin with the raw amino-acid sequence, 489 residues long: UDP-N-acetylmuramate--L-alanine ligase (489 aa).

130–136 (GTHGKTS) contributes to the ATP binding site.

Belongs to the MurCDEF family.

The protein localises to the cytoplasm. It catalyses the reaction UDP-N-acetyl-alpha-D-muramate + L-alanine + ATP = UDP-N-acetyl-alpha-D-muramoyl-L-alanine + ADP + phosphate + H(+). It functions in the pathway cell wall biogenesis; peptidoglycan biosynthesis. Cell wall formation. This chain is UDP-N-acetylmuramate--L-alanine ligase, found in Corynebacterium efficiens (strain DSM 44549 / YS-314 / AJ 12310 / JCM 11189 / NBRC 100395).